A 122-amino-acid polypeptide reads, in one-letter code: MIQVETRLNVADNSGAKLVECIKVIGGSKRRYAGIGDIIVVAVKEALPTSVIKKGTVEKAVIVRVSKEYRRPDGTYIRFDDNACVIVDDNKNPKGKRIFGPVARELRDHDFMKIVSLAPEVL.

The protein belongs to the universal ribosomal protein uL14 family. Part of the 50S ribosomal subunit. Forms a cluster with proteins L3 and L19. In the 70S ribosome, L14 and L19 interact and together make contacts with the 16S rRNA in bridges B5 and B8.

Functionally, binds to 23S rRNA. Forms part of two intersubunit bridges in the 70S ribosome. The polypeptide is Large ribosomal subunit protein uL14 (Treponema denticola (strain ATCC 35405 / DSM 14222 / CIP 103919 / JCM 8153 / KCTC 15104)).